A 541-amino-acid polypeptide reads, in one-letter code: Zinc finger protein 503 (541 aa).

Polar residues predominate over residues 1-18 (MSNSPLGSGSRISHFTTE). Disordered regions lie at residues 1–49 (MSNS…QAGR) and 97–255 (TCSQ…SSSV). Positions 137 to 157 (AEDKSSFKPYSKHPDKKDQSA) are enriched in basic and acidic residues. Residues 236–255 (SLSAAPSPTPASSSSSSSSV) are compositionally biased toward low complexity. Residues 411–439 (HVCNWVSATGPCDKRFSSSEELLGHLRTH) form a C2H2-type zinc finger. The disordered stretch occupies residues 474 to 511 (GASPGPLTLRSPHHHPLGLSSSRYHPYSKSPLPSGGAP).

The protein belongs to the Elbow/Noc family.

The protein localises to the nucleus. Its function is as follows. May function as a transcriptional repressor. This chain is Zinc finger protein 503 (znf503), found in Xenopus tropicalis (Western clawed frog).